Here is a 186-residue protein sequence, read N- to C-terminus: Ribosome-recycling factor (186 aa).

This sequence belongs to the RRF family.

The protein resides in the cytoplasm. Responsible for the release of ribosomes from messenger RNA at the termination of protein biosynthesis. May increase the efficiency of translation by recycling ribosomes from one round of translation to another. The sequence is that of Ribosome-recycling factor from Herminiimonas arsenicoxydans.